A 289-amino-acid polypeptide reads, in one-letter code: Aquaporin-2 (289 aa).

The tract at residues Met-1 to Arg-36 is disordered. Residues Met-1–His-47 are Cytoplasmic-facing. A helical transmembrane segment spans residues Phe-48–Ile-68. Topologically, residues Cys-69–Leu-90 are extracellular. A helical transmembrane segment spans residues Ile-91 to Val-111. Residues Ser-112 to Cys-135 are Cytoplasmic-facing. Residues Asn-117 to Ala-119 carry the NPA 1 motif. A helical membrane pass occupies residues Val-136–Met-156. The Extracellular segment spans residues Thr-157–Arg-175. The chain crosses the membrane as a helical span at residues Gly-176–Val-196. Residues Glu-197–Asn-202 are Cytoplasmic-facing. A helical transmembrane segment spans residues Phe-203–Tyr-223. Over Thr-224–His-247 the chain is Extracellular. Residues Asn-229 to Ala-231 carry the NPA 2 motif. A helical transmembrane segment spans residues Trp-248–Leu-268. Residues Gln-269–Asp-289 are Cytoplasmic-facing.

This sequence belongs to the MIP/aquaporin (TC 1.A.8) family.

It is found in the endoplasmic reticulum membrane. It localises to the cell membrane. Its function is as follows. Water channel required to facilitate the transport of water across membranes. Involved in freeze tolerance, osmotolerance and cell flocculation in liquid cultures. Is non-functional in most laboratory strains. The chain is Aquaporin-2 (AQY2) from Saccharomyces cerevisiae (Baker's yeast).